Here is a 285-residue protein sequence, read N- to C-terminus: Protease HtpX homolog (285 aa).

Helical transmembrane passes span 7–27 (TAMLMAAITALFIVIGGMIGG) and 30–50 (GMTIALLFALGMNFFSYWFSD). His131 contacts Zn(2+). Residue Glu132 is part of the active site. Residue His135 participates in Zn(2+) binding. Helical transmembrane passes span 146-166 (ITATMAGAISALANFAMFFGG) and 177-197 (IAGIAVALLAPIAGALIQMAI). Glu202 provides a ligand contact to Zn(2+).

This sequence belongs to the peptidase M48B family. Zn(2+) serves as cofactor.

Its subcellular location is the cell inner membrane. The sequence is that of Protease HtpX homolog from Burkholderia cenocepacia (strain HI2424).